A 341-amino-acid chain; its full sequence is HTH-type transcriptional repressor PurR (341 aa).

One can recognise an HTH lacI-type domain in the interval 2 to 56 (ATIKDVAKRANVSTTTVSHVINKTRFVAEETRNAVWAAIKELHYSPSAVARSLKV). The segment at residues 4-23 (IKDVAKRANVSTTTVSHVIN) is a DNA-binding region (H-T-H motif). The DNA-binding element occupies 48–56 (SAVARSLKV). Residues Tyr73, Arg190, Thr192, Phe221, and Asp275 each coordinate hypoxanthine.

In terms of assembly, homodimer.

The protein operates within purine metabolism; purine nucleotide biosynthesis [regulation]. Functionally, is the main repressor of the genes involved in the de novo synthesis of purine nucleotides, regulating purB, purC, purEK, purF, purHD, purL, purMN and guaBA expression. PurR is allosterically activated to bind its cognate DNA by binding the purine corepressors, hypoxanthine or guanine, thereby effecting transcription repression. This Escherichia fergusonii (strain ATCC 35469 / DSM 13698 / CCUG 18766 / IAM 14443 / JCM 21226 / LMG 7866 / NBRC 102419 / NCTC 12128 / CDC 0568-73) protein is HTH-type transcriptional repressor PurR.